We begin with the raw amino-acid sequence, 117 residues long: uncharacterized protein (117 aa).

2 helical membrane-spanning segments follow: residues 43–63 and 73–93; these read APIM…LMLL and AVQH…VFIV.

The protein localises to the cell membrane. This is an uncharacterized protein from Bacillus subtilis (strain 168).